Reading from the N-terminus, the 331-residue chain is MSTKEKLISHVMKEEPVGSRSKVTVVGVGMVGMASAISILLKDLCDELAMVDVMEDKLKGEVMDLQHGSLFLKTKIVGDKDYSVTANSKVVVVTAGARQQEGESRLNLVQRNVNIFKFIIPNIVKYSPNCILMVVSNPVDILTYVAWKLSGFPRHRVIGSGTNLDSARFRHLIGEKLHLHPSSCHAWIVGEHGDSSVPVWSGVNVAGVSLQGLNPQMGTEGDGENWKAIHKEVVDGAYEVIKLKGYTSWAIGMSVADLVESIIKNMHKVHPVSTLVQGMHGVKDEVFLSVPCVLGNSGLTDVIHMTLKAEEEKQVQKSAETLWGVQKELTL.

NAD(+) is bound by residues glycine 29–lysine 57 and arginine 98. The substrate site is built by arginine 105, asparagine 137, and arginine 168. Asparagine 137 is an NAD(+) binding site. Histidine 192 functions as the Proton acceptor in the catalytic mechanism. Threonine 247 contacts substrate.

This sequence belongs to the LDH/MDH superfamily. LDH family. In terms of assembly, homotetramer.

It is found in the cytoplasm. The enzyme catalyses (S)-lactate + NAD(+) = pyruvate + NADH + H(+). The protein operates within fermentation; pyruvate fermentation to lactate; (S)-lactate from pyruvate: step 1/1. Functionally, interconverts simultaneously and stereospecifically pyruvate and lactate with concomitant interconversion of NADH and NAD(+). The protein is L-lactate dehydrogenase A chain (ldha) of Patagonotothen tessellata (Black southern cod).